Here is an 83-residue protein sequence, read N- to C-terminus: Large ribosomal subunit protein bL27 (83 aa).

A disordered region spans residues 1-26; that stretch reads MAHKKAGGSSKNGRDSRGQRRGVKRF.

Belongs to the bacterial ribosomal protein bL27 family.

In Desulfosudis oleivorans (strain DSM 6200 / JCM 39069 / Hxd3) (Desulfococcus oleovorans), this protein is Large ribosomal subunit protein bL27.